The following is a 101-amino-acid chain: Small ribosomal subunit protein uS14 (101 aa).

It belongs to the universal ribosomal protein uS14 family. As to quaternary structure, part of the 30S ribosomal subunit. Contacts proteins S3 and S10.

Its function is as follows. Binds 16S rRNA, required for the assembly of 30S particles and may also be responsible for determining the conformation of the 16S rRNA at the A site. The sequence is that of Small ribosomal subunit protein uS14 from Erythrobacter litoralis (strain HTCC2594).